Reading from the N-terminus, the 222-residue chain is ATP-dependent dethiobiotin synthetase BioD (222 aa).

Residue 12 to 17 (DVGKTF) participates in ATP binding. Thr16 is a binding site for Mg(2+). Residue Lys37 is part of the active site. Ser41 lines the substrate pocket. ATP contacts are provided by residues Asp54 and 113-116 (EGAG). Residues Asp54 and Glu113 each contribute to the Mg(2+) site.

It belongs to the dethiobiotin synthetase family. In terms of assembly, homodimer. The cofactor is Mg(2+).

The protein resides in the cytoplasm. It carries out the reaction (7R,8S)-7,8-diammoniononanoate + CO2 + ATP = (4R,5S)-dethiobiotin + ADP + phosphate + 3 H(+). The protein operates within cofactor biosynthesis; biotin biosynthesis; biotin from 7,8-diaminononanoate: step 1/2. In terms of biological role, catalyzes a mechanistically unusual reaction, the ATP-dependent insertion of CO2 between the N7 and N8 nitrogen atoms of 7,8-diaminopelargonic acid (DAPA, also called 7,8-diammoniononanoate) to form a ureido ring. This is ATP-dependent dethiobiotin synthetase BioD from Anoxybacillus flavithermus (strain DSM 21510 / WK1).